The primary structure comprises 492 residues: Non-structural protein 1 (492 aa).

An RNA-binding region spans residues Met1–Leu81. The segment at Cys42–His79 is zinc-binding domain. The tract at residues Lys82 to Asn176 is important for cytoskeleton localization. The interaction with host IRF3 stretch occupies residues Thr318–Asp492. The short motif at Leu483 to Ser486 is the pLxIS motif element.

Belongs to the rotavirus NSP1 family. In terms of assembly, interacts (via C-terminus) with host IRF3; this interaction leads to IRF3 degradation. Interacts with host IRF7; this interaction leads to IRF7 degradation. Interacts with host CUL1 and CUL3.

It localises to the host cytoplasm. The protein localises to the host cytoskeleton. In terms of biological role, plays a role in the inhibition of host innate immunity by inducing the degradation of key host factors required to activate interferon production such as IRF3, IRF5 or IRF7. Associates with components of cullin RING ligases (CRLs) including CUL1 or CUL3, which are essential multisubunit ubiquitination complexes, to modulate their activities. The chain is Non-structural protein 1 from Oryctolagus cuniculus (Rabbit).